The primary structure comprises 499 residues: Serine/threonine protein phosphatase 2A 57 kDa regulatory subunit B' beta isoform (499 aa).

Residues 1 to 13 are compositionally biased toward basic residues; it reads MFKKIMKGGHRKP. The segment at 1 to 65 is disordered; that stretch reads MFKKIMKGGH…PVTATPPPPP (65 aa).

Belongs to the phosphatase 2A regulatory subunit B56 family. In terms of assembly, PP2A consists of a common heteromeric enzyme, composed of a catalytic subunit (subunits C), a constant regulatory subunit (subunit A), and a variety of regulatory subunits such as subunits B (the R2/B/PR55/B55, R3/B''/PR72/PR130/PR59 and R5/B'/B56 families). Interacts with BZR1. Interacts with BRI1. Interacts with SRK2E/OST1. As to expression, expressed ubiquitously, higher levels in cotyledons and flowers.

The protein resides in the nucleus. It localises to the cytoplasm. Functionally, the B regulatory subunit may modulate substrate selectivity and catalytic activity, and may also direct the localization of the catalytic enzyme to a particular subcellular compartment. Required for the formation of the PP2A holoenzyme that positively regulates brassinosteroid signaling by dephosphorylating and activating BZR1. The sequence is that of Serine/threonine protein phosphatase 2A 57 kDa regulatory subunit B' beta isoform (B'BETA) from Arabidopsis thaliana (Mouse-ear cress).